The sequence spans 417 residues: Cobalamin binding intrinsic factor (417 aa).

Residues 1–18 (MAWFALYLLSLLWATAGT) form the signal peptide. Disulfide bonds link Cys-26/Cys-246, Cys-103/Cys-288, and Cys-143/Cys-182. Asp-171 contacts cob(II)alamin. Residue Ser-191 is modified to Phosphoserine. Residues Asp-222 and Gln-270 each contribute to the cob(II)alamin site. Asn-311, Asn-330, and Asn-334 each carry an N-linked (GlcNAc...) asparagine glycan. Residues 365–370 (SWGLVV) and 386–395 (WQFLSGVTPL) contribute to the cob(II)alamin site. Asn-413 is a glycosylation site (N-linked (GlcNAc...) asparagine).

Belongs to the eukaryotic cobalamin transport proteins family. As to quaternary structure, interacts with CUBN (via CUB domains). Gastric mucosa.

The protein localises to the secreted. Its function is as follows. Promotes absorption of the essential vitamin cobalamin (Cbl) in the ileum. After interaction with CUBN, the CBLIF-cobalamin complex is internalized via receptor-mediated endocytosis. The polypeptide is Cobalamin binding intrinsic factor (Homo sapiens (Human)).